Here is a 115-residue protein sequence, read N- to C-terminus: NADH-ubiquinone oxidoreductase chain 3 (115 aa).

The next 3 helical transmembrane spans lie at 3-23, 55-75, and 84-104; these read VMLT…IAFW, FFLV…LLPL, and LTTM…SLAY.

The protein belongs to the complex I subunit 3 family. Core subunit of respiratory chain NADH dehydrogenase (Complex I) which is composed of 45 different subunits. Interacts with TMEM186. Interacts with TMEM242.

The protein localises to the mitochondrion inner membrane. The catalysed reaction is a ubiquinone + NADH + 5 H(+)(in) = a ubiquinol + NAD(+) + 4 H(+)(out). Its function is as follows. Core subunit of the mitochondrial membrane respiratory chain NADH dehydrogenase (Complex I) which catalyzes electron transfer from NADH through the respiratory chain, using ubiquinone as an electron acceptor. Essential for the catalytic activity of complex I. This chain is NADH-ubiquinone oxidoreductase chain 3, found in Canis lupus familiaris (Dog).